A 521-amino-acid polypeptide reads, in one-letter code: Probable ATP-dependent RNA helicase Dbp45A (521 aa).

Residues 7–35 carry the Q motif motif; the sequence is NPFQILGLRPWLVKQLTKLGLKGATPIQQ. Residues 38–209 enclose the Helicase ATP-binding domain; the sequence is IPAILAGQDC…IFPIASDCFE (172 aa). 51–58 lines the ATP pocket; that stretch reads AKTGSGKT. Positions 157–160 match the DEAD box motif; that stretch reads DEAD. The Helicase C-terminal domain occupies 237-386; sequence VLIEALRKYR…EHPIDQRMVE (150 aa). The segment at 448–521 is disordered; that stretch reads KRKLQHAEPA…GRADVKKDKA (74 aa). 2 stretches are compositionally biased toward basic and acidic residues: residues 460–482 and 502–521; these read EEGKALLQDERFKSVDSARFEKK and LNKEKPVAQKGRADVKKDKA.

The protein belongs to the DEAD box helicase family. DDX49/DBP8 subfamily.

The enzyme catalyses ATP + H2O = ADP + phosphate + H(+). Probable ATP-binding RNA helicase. This Drosophila melanogaster (Fruit fly) protein is Probable ATP-dependent RNA helicase Dbp45A (Dbp45A).